The sequence spans 160 residues: Small ribosomal subunit protein bS6 (160 aa).

The disordered stretch occupies residues 100 to 160; it reads PSSVLARKSD…DDARETAGAE (61 aa). 2 stretches are compositionally biased toward basic and acidic residues: residues 106–116 and 136–160; these read RKSDDRGDRGN and RSSE…AGAE.

This sequence belongs to the bacterial ribosomal protein bS6 family.

Its function is as follows. Binds together with bS18 to 16S ribosomal RNA. The polypeptide is Small ribosomal subunit protein bS6 (Gluconobacter oxydans (strain 621H) (Gluconobacter suboxydans)).